We begin with the raw amino-acid sequence, 251 residues long: 1-(5-phosphoribosyl)-5-[(5-phosphoribosylamino)methylideneamino] imidazole-4-carboxamide isomerase (251 aa).

Catalysis depends on Asp8, which acts as the Proton acceptor. Catalysis depends on Asp131, which acts as the Proton donor.

It belongs to the HisA/HisF family.

Its subcellular location is the cytoplasm. It catalyses the reaction 1-(5-phospho-beta-D-ribosyl)-5-[(5-phospho-beta-D-ribosylamino)methylideneamino]imidazole-4-carboxamide = 5-[(5-phospho-1-deoxy-D-ribulos-1-ylimino)methylamino]-1-(5-phospho-beta-D-ribosyl)imidazole-4-carboxamide. The protein operates within amino-acid biosynthesis; L-histidine biosynthesis; L-histidine from 5-phospho-alpha-D-ribose 1-diphosphate: step 4/9. This chain is 1-(5-phosphoribosyl)-5-[(5-phosphoribosylamino)methylideneamino] imidazole-4-carboxamide isomerase, found in Azoarcus sp. (strain BH72).